The following is a 114-amino-acid chain: Large ribosomal subunit protein uL22 (114 aa).

It belongs to the universal ribosomal protein uL22 family. In terms of assembly, part of the 50S ribosomal subunit.

This protein binds specifically to 23S rRNA; its binding is stimulated by other ribosomal proteins, e.g. L4, L17, and L20. It is important during the early stages of 50S assembly. It makes multiple contacts with different domains of the 23S rRNA in the assembled 50S subunit and ribosome. Functionally, the globular domain of the protein is located near the polypeptide exit tunnel on the outside of the subunit, while an extended beta-hairpin is found that lines the wall of the exit tunnel in the center of the 70S ribosome. In Alcanivorax borkumensis (strain ATCC 700651 / DSM 11573 / NCIMB 13689 / SK2), this protein is Large ribosomal subunit protein uL22.